A 170-amino-acid chain; its full sequence is ATP synthase F(1) complex subunit delta, mitochondrial (170 aa).

The transit peptide at 1 to 33 (MIRSIIKSSNNLLKSNVAINSNKRFFATEASAT) directs the protein to the mitochondrion.

Belongs to the ATPase epsilon chain family. In terms of assembly, component of the ATP synthase complex composed at least of ATP5F1A/subunit alpha, ATP5F1B/subunit beta, ATP5MC1/subunit c (homooctomer), MT-ATP6/subunit a, MT-ATP8/subunit 8, ATP5ME/subunit e, ATP5MF/subunit f, ATP5MG/subunit g, ATP5MK/subunit k, ATP5MJ/subunit j, ATP5F1C/subunit gamma, ATP5F1D/subunit delta, ATP5F1E/subunit epsilon, ATP5PF/subunit F6, ATP5PB/subunit b, ATP5PD/subunit d, ATP5PO/subunit OSCP. ATP synthase complex consists of a soluble F(1) head domain (subunits alpha(3) and beta(3)) - the catalytic core - and a membrane F(0) domain - the membrane proton channel (subunits c, a, 8, e, f, g, k and j). These two domains are linked by a central stalk (subunits gamma, delta, and epsilon) rotating inside the F1 region and a stationary peripheral stalk (subunits F6, b, d, and OSCP).

It is found in the mitochondrion. The protein resides in the mitochondrion inner membrane. Subunit delta, of the mitochondrial membrane ATP synthase complex (F(1)F(0) ATP synthase or Complex V) that produces ATP from ADP in the presence of a proton gradient across the membrane which is generated by electron transport complexes of the respiratory chain. ATP synthase complex consist of a soluble F(1) head domain - the catalytic core - and a membrane F(1) domain - the membrane proton channel. These two domains are linked by a central stalk rotating inside the F(1) region and a stationary peripheral stalk. During catalysis, ATP synthesis in the catalytic domain of F(1) is coupled via a rotary mechanism of the central stalk subunits to proton translocation. In vivo, can only synthesize ATP although its ATP hydrolase activity can be activated artificially in vitro. With the central stalk subunit gamma, is essential for the biogenesis of F(1) catalytic part of the ATP synthase complex namely in the formation of F1 assembly intermediate. This chain is ATP synthase F(1) complex subunit delta, mitochondrial, found in Dictyostelium discoideum (Social amoeba).